We begin with the raw amino-acid sequence, 270 residues long: Acetyl-coenzyme A carboxylase carboxyl transferase subunit beta (270 aa).

Positions 16 to 270 (LFAKCPACKH…KLLAFHGGSK (255 aa)) constitute a CoA carboxyltransferase N-terminal domain. Residues C20, C23, C38, and C41 each contribute to the Zn(2+) site. The C4-type zinc-finger motif lies at 20–41 (CPACKHMIYQKDLGLEKICPKC).

This sequence belongs to the AccD/PCCB family. As to quaternary structure, acetyl-CoA carboxylase is a heterohexamer composed of biotin carboxyl carrier protein (AccB), biotin carboxylase (AccC) and two subunits each of ACCase subunit alpha (AccA) and ACCase subunit beta (AccD). Zn(2+) is required as a cofactor.

It is found in the cytoplasm. The catalysed reaction is N(6)-carboxybiotinyl-L-lysyl-[protein] + acetyl-CoA = N(6)-biotinyl-L-lysyl-[protein] + malonyl-CoA. It participates in lipid metabolism; malonyl-CoA biosynthesis; malonyl-CoA from acetyl-CoA: step 1/1. Functionally, component of the acetyl coenzyme A carboxylase (ACC) complex. Biotin carboxylase (BC) catalyzes the carboxylation of biotin on its carrier protein (BCCP) and then the CO(2) group is transferred by the transcarboxylase to acetyl-CoA to form malonyl-CoA. The protein is Acetyl-coenzyme A carboxylase carboxyl transferase subunit beta of Streptococcus mutans serotype c (strain NN2025).